Consider the following 86-residue polypeptide: UPF0386 protein RC1_1783 (86 aa).

It belongs to the UPF0386 family.

The sequence is that of UPF0386 protein RC1_1783 from Rhodospirillum centenum (strain ATCC 51521 / SW).